The sequence spans 177 residues: Large ribosomal subunit protein uL6 (177 aa).

This sequence belongs to the universal ribosomal protein uL6 family. In terms of assembly, part of the 50S ribosomal subunit.

In terms of biological role, this protein binds to the 23S rRNA, and is important in its secondary structure. It is located near the subunit interface in the base of the L7/L12 stalk, and near the tRNA binding site of the peptidyltransferase center. The sequence is that of Large ribosomal subunit protein uL6 from Cupriavidus taiwanensis (strain DSM 17343 / BCRC 17206 / CCUG 44338 / CIP 107171 / LMG 19424 / R1) (Ralstonia taiwanensis (strain LMG 19424)).